The chain runs to 215 residues: Small ribosomal subunit protein uS5 (215 aa).

Residues 1-11 (MTDSSPQSNPN) are compositionally biased toward polar residues. Residues 1-61 (MTDSSPQSNP…GQDRDSEWQE (61 aa)) are disordered. Low complexity predominate over residues 12–28 (AVPGAADVPAAAQGQQQ). A compositionally biased stretch (basic and acidic residues) spans 39-61 (RGDRRGDRRGGRRGQDRDSEWQE). Positions 59–122 (WQERVVQIRR…ADGKKHLVKV (64 aa)) constitute an S5 DRBM domain.

This sequence belongs to the universal ribosomal protein uS5 family. In terms of assembly, part of the 30S ribosomal subunit. Contacts proteins S4 and S8.

Its function is as follows. With S4 and S12 plays an important role in translational accuracy. In terms of biological role, located at the back of the 30S subunit body where it stabilizes the conformation of the head with respect to the body. The protein is Small ribosomal subunit protein uS5 of Synechococcus sp. (strain CC9902).